We begin with the raw amino-acid sequence, 551 residues long: CTP synthase (551 aa).

Residues 1–267 are amidoligase domain; sequence MPKYVFVTGG…GRYVMEHLGW (267 aa). Ser13 lines the CTP pocket. Residue Ser13 participates in UTP binding. 14–19 is a binding site for ATP; the sequence is SVGKGI. L-glutamine is bound at residue Tyr54. Asp71 contributes to the ATP binding site. Mg(2+)-binding residues include Asp71 and Glu141. CTP is bound by residues 148–150, 188–193, and Lys224; these read DIE and KTKPTQ. UTP is bound by residues 188–193 and Lys224; that span reads KTKPTQ. A Glutamine amidotransferase type-1 domain is found at 292-532; sequence RIALVGKYVE…IGVAKHVLRE (241 aa). Residue Gly353 coordinates L-glutamine. Catalysis depends on Cys380, which acts as the Nucleophile; for glutamine hydrolysis. L-glutamine is bound by residues 381–384, Glu404, and Arg460; that span reads YGLH. Catalysis depends on residues His505 and Glu507.

The protein belongs to the CTP synthase family. In terms of assembly, homotetramer.

It carries out the reaction UTP + L-glutamine + ATP + H2O = CTP + L-glutamate + ADP + phosphate + 2 H(+). The catalysed reaction is L-glutamine + H2O = L-glutamate + NH4(+). The enzyme catalyses UTP + NH4(+) + ATP = CTP + ADP + phosphate + 2 H(+). It functions in the pathway pyrimidine metabolism; CTP biosynthesis via de novo pathway; CTP from UDP: step 2/2. Its activity is regulated as follows. Allosterically activated by GTP, when glutamine is the substrate; GTP has no effect on the reaction when ammonia is the substrate. The allosteric effector GTP functions by stabilizing the protein conformation that binds the tetrahedral intermediate(s) formed during glutamine hydrolysis. Inhibited by the product CTP, via allosteric rather than competitive inhibition. Functionally, catalyzes the ATP-dependent amination of UTP to CTP with either L-glutamine or ammonia as the source of nitrogen. Regulates intracellular CTP levels through interactions with the four ribonucleotide triphosphates. The polypeptide is CTP synthase (Thermomicrobium roseum (strain ATCC 27502 / DSM 5159 / P-2)).